We begin with the raw amino-acid sequence, 174 residues long: Probable phenolic acid decarboxylase (174 aa).

Belongs to the PadC family.

Catalyzes the decarboxylation of phenolic acids. The sequence is that of Probable phenolic acid decarboxylase (padC) from Vibrio cholerae serotype O1 (strain ATCC 39315 / El Tor Inaba N16961).